The primary structure comprises 264 residues: Thymidylate synthase (264 aa).

A dUMP-binding site is contributed by Arg-21. His-51 lines the (6R)-5,10-methylene-5,6,7,8-tetrahydrofolate pocket. Residue 126–127 (RR) participates in dUMP binding. Cys-146 (nucleophile) is an active-site residue. DUMP contacts are provided by residues 166-169 (RSAD), Asn-177, and 207-209 (HLY). A (6R)-5,10-methylene-5,6,7,8-tetrahydrofolate-binding site is contributed by Asp-169. Residue Ala-263 participates in (6R)-5,10-methylene-5,6,7,8-tetrahydrofolate binding.

The protein belongs to the thymidylate synthase family. Bacterial-type ThyA subfamily. As to quaternary structure, homodimer.

The protein resides in the cytoplasm. It catalyses the reaction dUMP + (6R)-5,10-methylene-5,6,7,8-tetrahydrofolate = 7,8-dihydrofolate + dTMP. It participates in pyrimidine metabolism; dTTP biosynthesis. Functionally, catalyzes the reductive methylation of 2'-deoxyuridine-5'-monophosphate (dUMP) to 2'-deoxythymidine-5'-monophosphate (dTMP) while utilizing 5,10-methylenetetrahydrofolate (mTHF) as the methyl donor and reductant in the reaction, yielding dihydrofolate (DHF) as a by-product. This enzymatic reaction provides an intracellular de novo source of dTMP, an essential precursor for DNA biosynthesis. In Nitrosomonas eutropha (strain DSM 101675 / C91 / Nm57), this protein is Thymidylate synthase.